Consider the following 98-residue polypeptide: NADH-ubiquinone oxidoreductase chain 4L (98 aa).

Helical transmembrane passes span 1–21, 29–49, and 61–81; these read MSMV…GMLV, SLLC…VTIL, and IVLL…LVMV.

Belongs to the complex I subunit 4L family. As to quaternary structure, core subunit of respiratory chain NADH dehydrogenase (Complex I) which is composed of 45 different subunits.

It is found in the mitochondrion inner membrane. The enzyme catalyses a ubiquinone + NADH + 5 H(+)(in) = a ubiquinol + NAD(+) + 4 H(+)(out). Functionally, core subunit of the mitochondrial membrane respiratory chain NADH dehydrogenase (Complex I) which catalyzes electron transfer from NADH through the respiratory chain, using ubiquinone as an electron acceptor. Part of the enzyme membrane arm which is embedded in the lipid bilayer and involved in proton translocation. This is NADH-ubiquinone oxidoreductase chain 4L (MT-ND4L) from Vulpes vulpes (Red fox).